Consider the following 934-residue polypeptide: LPS-assembly protein LptD (934 aa).

The N-terminal stretch at 1 to 33 (MALKSPAFRRKFPLLVTGGLLALQPFATSYVVA) is a signal peptide. Positions 52 to 86 (KSPVNNLPPRPVHDGAALTSGTEAPSAEAESADKP) are disordered.

The protein belongs to the LptD family. Component of the lipopolysaccharide transport and assembly complex. Interacts with LptE and LptA.

The protein resides in the cell outer membrane. Its function is as follows. Together with LptE, is involved in the assembly of lipopolysaccharide (LPS) at the surface of the outer membrane. In Pseudomonas putida (strain W619), this protein is LPS-assembly protein LptD.